We begin with the raw amino-acid sequence, 513 residues long: MHLGVEEPIRECQYNQICTHNSSPMDTPHIKKKKNKRKWQVFPGRNRFYCNGRIMMAKQTGVFYLTMVLILVTSGLFFAFDCPFLASNLTPAIPAIGGVLFVFVMGMLLRASFSDPGVLPRATPEEAADIERQIDANNGPSGPGYRPPPRTREVLINGQTVKLKYCFTCKIFRPPRASHCSLCDNCVDRFDHHCPWVGNCVGRRNYRFFYLFILSLSFLTIFIFAFVITHVILNALRKALALSTAADFEAVQKDPTGLAFLVLSKTALLDILEVVVCFFSVWSIVGLSGFHTYLISSNQTTNEDIKGSWSSKRGKGNYNPYSYGNFITNCCSALCGPLPPSLIDRRGFIQPDTPQPATQTNGTSACPPNQVQSHMCAQDQCIQSTKFVLQAATNPLLHSQPVILGGGPPLQAKTSLGGPCSTMGPPQPSLPSSIPGLSCGGELMALRDSEIHCHHHLHHQHFISPEETPSPPAPLPCATHLGHHVHPAQLFDPVSQDSLHEDSVRGLVKLSSV.

Over 1–59 (MHLGVEEPIRECQYNQICTHNSSPMDTPHIKKKKNKRKWQVFPGRNRFYCNGRIMMAKQ) the chain is Cytoplasmic. The chain crosses the membrane as a helical span at residues 60–80 (TGVFYLTMVLILVTSGLFFAF). Topologically, residues 81–88 (DCPFLASN) are lumenal. A helical membrane pass occupies residues 89–109 (LTPAIPAIGGVLFVFVMGMLL). The Cytoplasmic segment spans residues 110–207 (RASFSDPGVL…GNCVGRRNYR (98 aa)). Residues 164-214 (KYCFTCKIFRPPRASHCSLCDNCVDRFDHHCPWVGNCVGRRNYRFFYLFIL) form the DHHC domain. Cys-194 serves as the catalytic S-palmitoyl cysteine intermediate. Residues 208 to 228 (FFYLFILSLSFLTIFIFAFVI) traverse the membrane as a helical segment. The Lumenal portion of the chain corresponds to 229 to 266 (THVILNALRKALALSTAADFEAVQKDPTGLAFLVLSKT). Residues 267-287 (ALLDILEVVVCFFSVWSIVGL) traverse the membrane as a helical segment. The Cytoplasmic portion of the chain corresponds to 288–513 (SGFHTYLISS…VRGLVKLSSV (226 aa)). The disordered stretch occupies residues 348–369 (FIQPDTPQPATQTNGTSACPPN). Positions 355–369 (QPATQTNGTSACPPN) are enriched in polar residues.

This sequence belongs to the DHHC palmitoyltransferase family. ERF2/ZDHHC9 subfamily.

It localises to the endoplasmic reticulum membrane. The protein resides in the golgi apparatus membrane. The catalysed reaction is L-cysteinyl-[protein] + hexadecanoyl-CoA = S-hexadecanoyl-L-cysteinyl-[protein] + CoA. Its function is as follows. Palmitoyltransferase that could catalyze the addition of palmitate onto various protein substrates. The polypeptide is Palmitoyltransferase ZDHHC14 (zdhhc14) (Danio rerio (Zebrafish)).